A 211-amino-acid chain; its full sequence is Glutathione S-transferase class-mu 28 kDa isozyme (211 aa).

The 83-residue stretch at 4–86 (DHIKVIYFNG…YMAKKHHMMG (83 aa)) folds into the GST N-terminal domain. Residues Y10, R16, W41, K45, L53, E70, S71, and D104 each contribute to the glutathione site. One can recognise a GST C-terminal domain in the interval 88-211 (TDEEYYNVEK…YLSDRAATPF (124 aa)).

This sequence belongs to the GST superfamily. Mu family. Homodimer.

The enzyme catalyses RX + glutathione = an S-substituted glutathione + a halide anion + H(+). Its function is as follows. Conjugation of reduced glutathione to a wide number of exogenous and endogenous hydrophobic electrophiles. In terms of biological role, GST isoenzymes appear to play a central role in the parasite detoxification system. Other functions are also suspected including a role in increasing the solubility of haematin in the parasite gut. The chain is Glutathione S-transferase class-mu 28 kDa isozyme from Schistosoma bovis (Blood fluke).